We begin with the raw amino-acid sequence, 161 residues long: Allophycocyanin beta chain (161 aa).

An N4-methylasparagine modification is found at asparagine 71. Position 81 (cysteine 81) interacts with (2R,3E)-phycocyanobilin.

The protein belongs to the phycobiliprotein family. In terms of assembly, heterodimer of an alpha and a beta chain. In terms of processing, contains one covalently linked phycocyanobilin chromophore.

It localises to the cellular thylakoid membrane. Its function is as follows. Light-harvesting photosynthetic bile pigment-protein from the phycobiliprotein complex. Allophycocyanin has a maximum absorption at approximately 650 nanometers. The polypeptide is Allophycocyanin beta chain (apcB) (Synechococcus sp. (strain ATCC 27144 / PCC 6301 / SAUG 1402/1) (Anacystis nidulans)).